The primary structure comprises 105 residues: Phosphoribosyl-AMP cyclohydrolase (105 aa).

Asp72 lines the Mg(2+) pocket. Residue Cys73 participates in Zn(2+) binding. 2 residues coordinate Mg(2+): Asp74 and Asp76. 2 residues coordinate Zn(2+): Cys89 and Cys96.

This sequence belongs to the PRA-CH family. In terms of assembly, homodimer. The cofactor is Mg(2+). It depends on Zn(2+) as a cofactor.

It is found in the cytoplasm. The enzyme catalyses 1-(5-phospho-beta-D-ribosyl)-5'-AMP + H2O = 1-(5-phospho-beta-D-ribosyl)-5-[(5-phospho-beta-D-ribosylamino)methylideneamino]imidazole-4-carboxamide. It functions in the pathway amino-acid biosynthesis; L-histidine biosynthesis; L-histidine from 5-phospho-alpha-D-ribose 1-diphosphate: step 3/9. Its function is as follows. Catalyzes the hydrolysis of the adenine ring of phosphoribosyl-AMP. This is Phosphoribosyl-AMP cyclohydrolase from Listeria monocytogenes serovar 1/2a (strain ATCC BAA-679 / EGD-e).